The chain runs to 431 residues: Chaperone SurA (431 aa).

Residues 1 to 20 (MKNWRTLILGLALSASTAFA) form the signal peptide. PpiC domains lie at 171–272 (NDEL…KVND) and 282–382 (VTET…QLLD).

The protein localises to the periplasm. It catalyses the reaction [protein]-peptidylproline (omega=180) = [protein]-peptidylproline (omega=0). Its function is as follows. Chaperone involved in the correct folding and assembly of outer membrane proteins. Recognizes specific patterns of aromatic residues and the orientation of their side chains, which are found more frequently in integral outer membrane proteins. May act in both early periplasmic and late outer membrane-associated steps of protein maturation. In Pectobacterium atrosepticum (strain SCRI 1043 / ATCC BAA-672) (Erwinia carotovora subsp. atroseptica), this protein is Chaperone SurA.